We begin with the raw amino-acid sequence, 286 residues long: Pantothenate synthetase (286 aa).

30–37 contacts ATP; it reads MGNLHDGH. His37 functions as the Proton donor in the catalytic mechanism. Gln61 contributes to the (R)-pantoate binding site. Gln61 lines the beta-alanine pocket. An ATP-binding site is contributed by 148–151; sequence GKKD. (R)-pantoate is bound at residue Gln154. Residues Val177 and 185–188 each bind ATP; that span reads LSSR.

It belongs to the pantothenate synthetase family. Homodimer.

The protein localises to the cytoplasm. It carries out the reaction (R)-pantoate + beta-alanine + ATP = (R)-pantothenate + AMP + diphosphate + H(+). It participates in cofactor biosynthesis; (R)-pantothenate biosynthesis; (R)-pantothenate from (R)-pantoate and beta-alanine: step 1/1. Functionally, catalyzes the condensation of pantoate with beta-alanine in an ATP-dependent reaction via a pantoyl-adenylate intermediate. This is Pantothenate synthetase from Psychrobacter sp. (strain PRwf-1).